The following is a 61-amino-acid chain: Bacteriocin leucocin-A (61 aa).

A propeptide spanning residues M1–G24 is cleaved from the precursor. C33 and C38 are joined by a disulfide.

The protein belongs to the bacteriocin class IIA/YGNGV family.

It is found in the secreted. Inhibits a wide spectrum of lactic acid bacteria. The polypeptide is Bacteriocin leucocin-A (lcnA) (Leuconostoc gelidum).